Here is a 749-residue protein sequence, read N- to C-terminus: MDAFKLLTRSTNLKTGRAAATSAAQTSRLPSTGKAANPQLFHNSEADRLLEEKKKHGQKRKRGHGADDAGSEDEDAADLDFFSSAKRASTGGAVAGKRHQEQASADKDGDSGSEDGSEMDEVQRRTVLNAHKIKVTDLRDLDQIQSTNAQTLQTEEPKKKKKKKAKAQQEEPKTLTKKEQKKARRLFPQPLVSFKELRTKYKISRRLAENIAEQGFTVPTEVQLGTLPLQLGDSSVQQASKPGETVEPDLLVVAPTGSGKTLSFLIPVINKIVRHHHEQPDERGIFAVVVAPTKELASQIVNEGRKLVQGTGVKITLMKKGMQVVERDGDGDSDEKDVLDEDSADSGSDSEDDEQTTDKKTKGKAPVTKSDILVTTPLLLVNALSANRTKPLAALPLVRNIVLDEADVLLDPLFREQTLDIWRSCTHPELRASLWSATMGSNVEDLAKSTIQERKDLSGTTKSYPLIRLVVGLKDSAIPNIQHKLVYAATEQGKLLGLRQLLHPTARTATDVHLRPPFLIFTQTIPRAVALHSELLYDIPPEAGGSSRIAVLHSELSDSQRSEIMKGFRKGEIWILVTTDLLARGVDFRGINGVVNYDIPNSAAVYVHRVGRTGRAGREGGVAVTYYTKEDIPYVKSIANIIDVSEKLRGAGGEKSVQKWLLDSLPDLSKKDKKELKKHGVKARQSNLKSIKDNKEFRQAKISTKSGYERRMENKKKGAIAASRNRKSQPQAPSTGADSGDDSWSGLED.

Disordered regions lie at residues 1 to 121 and 148 to 182; these read MDAF…EMDE and NAQT…EQKK. The segment covering 17–28 has biased composition (low complexity); the sequence is RAAATSAAQTSR. Residues 44-54 show a composition bias toward basic and acidic residues; sequence SEADRLLEEKK. Over residues 69 to 78 the composition is skewed to acidic residues; the sequence is AGSEDEDAAD. Basic and acidic residues predominate over residues 98–110; it reads RHQEQASADKDGD. Residues 111-120 show a composition bias toward acidic residues; it reads SGSEDGSEMD. The segment covering 167–178 has biased composition (basic and acidic residues); sequence AQQEEPKTLTKK. A Q motif motif is present at residues 192 to 224; the sequence is VSFKELRTKYKISRRLAENIAEQGFTVPTEVQL. Positions 241 to 457 constitute a Helicase ATP-binding domain; it reads KPGETVEPDL…KSTIQERKDL (217 aa). Position 254 to 261 (254 to 261) interacts with ATP; the sequence is APTGSGKT. Residues 324–366 form a disordered region; sequence VVERDGDGDSDEKDVLDEDSADSGSDSEDDEQTTDKKTKGKAP. Residues 331-355 show a composition bias toward acidic residues; that stretch reads GDSDEKDVLDEDSADSGSDSEDDEQ. Positions 404–407 match the DEAD box motif; sequence DEAD. The Helicase C-terminal domain occupies 497–665; it reads GLRQLLHPTA…SVQKWLLDSL (169 aa). Positions 672–749 are disordered; it reads DKKELKKHGV…GDDSWSGLED (78 aa). Basic and acidic residues-rich tracts occupy residues 690-699 and 707-716; these read SIKDNKEFRQ and GYERRMENKK. Residues 728 to 737 show a composition bias toward polar residues; sequence SQPQAPSTGA.

It belongs to the DEAD box helicase family. DDX52/ROK1 subfamily. In terms of assembly, interacts with the U3 snoRNA and is associated with the 90S and 40S pre-ribosomes.

It localises to the nucleus. The protein localises to the nucleolus. It carries out the reaction ATP + H2O = ADP + phosphate + H(+). In terms of biological role, ATP-dependent RNA helicase involved in 40S ribosomal subunit biogenesis. Required for the processing and cleavage of 35S pre-rRNA at sites A0, A1, and A2, leading to mature 18S rRNA. This chain is ATP-dependent RNA helicase rok1 (rok1), found in Aspergillus terreus (strain NIH 2624 / FGSC A1156).